The chain runs to 197 residues: Class A basic helix-loop-helix protein 15 (197 aa).

Basic residues predominate over residues methionine 1–threonine 12. Disordered stretches follow at residues methionine 1–arginine 82 and threonine 175–serine 197. 2 positions are modified to phosphothreonine: threonine 12 and threonine 25. Polar residues predominate over residues aspartate 27 to serine 36. A compositionally biased stretch (basic and acidic residues) spans serine 65–arginine 82. Residues glutamine 72–leucine 124 enclose the bHLH domain.

In terms of assembly, forms homodimers or heterodimers with TCF3 gene products E12 and E47. These dimers bind to the E-box site, however, heterodimer with MYOD1 does not bind target DNA. Expressed in liver, spleen and olfactory epithelium. Weaker expression is seen in skeletal muscle, cardiac muscle, eye and brain tissue.

The protein resides in the nucleus. Plays a role in controlling the transcriptional activity of MyoD, ensuring that expanding myoblast populations remain undifferentiated. Repression may occur through muscle-specific E-box occupancy by homodimers. May also negatively regulate bHLH-mediated transcription through an N-terminal repressor domain. Serves as a key regulator of acinar cell function, stability, and identity. Also required for normal organelle localization in exocrine cells and for mitochondrial calcium ion transport. May function as a unique regulator of gene expression in several different embryonic and postnatal cell lineages. Binds to the E-box consensus sequence 5'-CANNTG-3'. In Rattus norvegicus (Rat), this protein is Class A basic helix-loop-helix protein 15 (Bhlha15).